Consider the following 141-residue polypeptide: Hemoglobin subunit alpha (141 aa).

The Globin domain occupies 1–141 (VLSSDDKCNV…VSSVLTSKYR (141 aa)). Position 58 (His58) interacts with O2. Residue His87 participates in heme b binding.

Belongs to the globin family. Heterotetramer of two alpha chains and two beta chains. As to expression, red blood cells.

Involved in oxygen transport from the lung to the various peripheral tissues. Has antimicrobial activity against B.subtilis ATCC 6633. Has antioxidant activity. The protein is Hemoglobin subunit alpha of Crocodylus siamensis (Siamese crocodile).